The sequence spans 372 residues: MILQRDSDYSDGTVLGSMCTEPHPVAAEAFVAGLHVNLGDPYLFPNAYRAERECIGWLAETLLDHPAPEEAEGSIVSGGTEANILAAYAAREVTGGREIIVPATRHFSFEKAARMLRMKLVEAPLRSDYTVDVDAVQDLISRDTALIVGIVGTTETGSVDDIEALSDVAEDHGVPLHVDAAFGGFTAPFLREEYPLPRFGFDLEAVVSVTVDPHKMGLVPPPAGGIVFRDDEFPKAIEVYAPYLSGGGASQYTITGTRPGAPVLALYANILELGEEGYRRIAFRCYEETLKVAEKARELGLELAVDPPHLNLVNIRLPDRGTAERLLRESEREGWKISVSTKPLGVRIVMMPHLDAETVSRFLELVARVLGG.

Lysine 215 is subject to N6-(pyridoxal phosphate)lysine.

This sequence belongs to the group II decarboxylase family. MfnA subfamily. Pyridoxal 5'-phosphate serves as cofactor.

It catalyses the reaction L-tyrosine + H(+) = tyramine + CO2. It carries out the reaction L-aspartate + H(+) = beta-alanine + CO2. The protein operates within cofactor biosynthesis; methanofuran biosynthesis. It functions in the pathway cofactor biosynthesis; coenzyme A biosynthesis. Catalyzes the decarboxylation of L-tyrosine to produce tyramine for methanofuran biosynthesis. Can also catalyze the decarboxylation of L-aspartate to produce beta-alanine for coenzyme A (CoA) biosynthesis. The sequence is that of Probable L-tyrosine/L-aspartate decarboxylase from Methanopyrus kandleri (strain AV19 / DSM 6324 / JCM 9639 / NBRC 100938).